A 319-amino-acid polypeptide reads, in one-letter code: Acetyl esterase (319 aa).

The Involved in the stabilization of the negatively charged intermediate by the formation of the oxyanion hole motif lies at 91–93; sequence HGG. Active-site residues include S165, D262, and H292.

Belongs to the 'GDXG' lipolytic enzyme family. As to quaternary structure, homodimer. Interacts with MalT and MelA.

The protein resides in the cytoplasm. Functionally, displays esterase activity towards short chain fatty esters (acyl chain length of up to 8 carbons). Able to hydrolyze triacetylglycerol (triacetin) and tributyrylglycerol (tributyrin), but not trioleylglycerol (triolein) or cholesterol oleate. Negatively regulates MalT activity by antagonizing maltotriose binding. Inhibits MelA galactosidase activity. The chain is Acetyl esterase from Shigella boydii serotype 4 (strain Sb227).